Reading from the N-terminus, the 238-residue chain is Ribonuclease PH (238 aa).

Residues Arg86 and 124–126 contribute to the phosphate site; that span reads GTR.

This sequence belongs to the RNase PH family. As to quaternary structure, homohexameric ring arranged as a trimer of dimers.

The enzyme catalyses tRNA(n+1) + phosphate = tRNA(n) + a ribonucleoside 5'-diphosphate. Phosphorolytic 3'-5' exoribonuclease that plays an important role in tRNA 3'-end maturation. Removes nucleotide residues following the 3'-CCA terminus of tRNAs; can also add nucleotides to the ends of RNA molecules by using nucleoside diphosphates as substrates, but this may not be physiologically important. Probably plays a role in initiation of 16S rRNA degradation (leading to ribosome degradation) during starvation. This is Ribonuclease PH from Salmonella agona (strain SL483).